Here is a 410-residue protein sequence, read N- to C-terminus: Phosphoglycerate kinase (410 aa).

Substrate is bound by residues 24-26 (DLN), Arg40, 63-66 (HLGR), Arg122, and Arg162. Residues Lys212, Gly300, Glu331, and 360–363 (GGDS) contribute to the ATP site.

It belongs to the phosphoglycerate kinase family. Monomer.

Its subcellular location is the cytoplasm. It catalyses the reaction (2R)-3-phosphoglycerate + ATP = (2R)-3-phospho-glyceroyl phosphate + ADP. It functions in the pathway carbohydrate degradation; glycolysis; pyruvate from D-glyceraldehyde 3-phosphate: step 2/5. This is Phosphoglycerate kinase from Nocardia farcinica (strain IFM 10152).